A 186-amino-acid polypeptide reads, in one-letter code: Peptidyl-tRNA hydrolase (186 aa).

Y14 lines the tRNA pocket. H19 (proton acceptor) is an active-site residue. The tRNA site is built by Y61, N63, and N107.

It belongs to the PTH family. As to quaternary structure, monomer.

It is found in the cytoplasm. It catalyses the reaction an N-acyl-L-alpha-aminoacyl-tRNA + H2O = an N-acyl-L-amino acid + a tRNA + H(+). Hydrolyzes ribosome-free peptidyl-tRNAs (with 1 or more amino acids incorporated), which drop off the ribosome during protein synthesis, or as a result of ribosome stalling. Its function is as follows. Catalyzes the release of premature peptidyl moieties from peptidyl-tRNA molecules trapped in stalled 50S ribosomal subunits, and thus maintains levels of free tRNAs and 50S ribosomes. This is Peptidyl-tRNA hydrolase from Helicobacter pylori (strain J99 / ATCC 700824) (Campylobacter pylori J99).